A 211-amino-acid chain; its full sequence is NADH-quinone oxidoreductase subunit A (211 aa).

Transmembrane regions (helical) follow at residues 7–27, 61–81, and 88–108; these read WSAL…LVVP, FYLV…LYAY, and VGWI…IGLI.

It belongs to the complex I subunit 3 family. As to quaternary structure, NDH-1 is composed of 14 different subunits. Subunits NuoA, H, J, K, L, M, N constitute the membrane sector of the complex.

The protein localises to the cell inner membrane. The catalysed reaction is a quinone + NADH + 5 H(+)(in) = a quinol + NAD(+) + 4 H(+)(out). Its function is as follows. NDH-1 shuttles electrons from NADH, via FMN and iron-sulfur (Fe-S) centers, to quinones in the respiratory chain. The immediate electron acceptor for the enzyme in this species is believed to be ubiquinone. Couples the redox reaction to proton translocation (for every two electrons transferred, four hydrogen ions are translocated across the cytoplasmic membrane), and thus conserves the redox energy in a proton gradient. The sequence is that of NADH-quinone oxidoreductase subunit A from Psychrobacter sp. (strain PRwf-1).